A 222-amino-acid polypeptide reads, in one-letter code: uncharacterized protein (222 aa).

The next 2 helical transmembrane spans lie at 22–42 (IRVILFIMAICMAMVLLFLYI) and 189–209 (AICLALGFFLSIVISVMFCLV).

The protein localises to the cell membrane. This is an uncharacterized protein from Escherichia coli (strain K12).